The chain runs to 91 residues: NADH-ubiquinone oxidoreductase chain 4L (91 aa).

The next 3 helical transmembrane spans lie at 8-28, 38-58, and 59-79; these read LYFI…MILL, LLML…VFLI, and SIVC…FFYG.

The protein belongs to the complex I subunit 4L family.

Its subcellular location is the mitochondrion membrane. The enzyme catalyses a ubiquinone + NADH + 5 H(+)(in) = a ubiquinol + NAD(+) + 4 H(+)(out). Functionally, core subunit of the mitochondrial membrane respiratory chain NADH dehydrogenase (Complex I) that is believed to belong to the minimal assembly required for catalysis. Complex I functions in the transfer of electrons from NADH to the respiratory chain. The immediate electron acceptor for the enzyme is believed to be ubiquinone. The chain is NADH-ubiquinone oxidoreductase chain 4L (ND4L) from Rhipicephalus sanguineus (Brown dog tick).